Reading from the N-terminus, the 398-residue chain is Carbamoyl phosphate synthase small chain (398 aa).

The CPSase stretch occupies residues 1–207 (MIQTISSSRP…KGYGTNNVHN (207 aa)). The L-glutamine site is built by serine 60, glycine 257, and glycine 259. Residues 209 to 397 (HIVAIDYGIK…CDLIMNHKKI (189 aa)) enclose the Glutamine amidotransferase type-1 domain. Cysteine 286 serves as the catalytic Nucleophile. The L-glutamine site is built by leucine 287, glutamine 290, asparagine 328, glycine 330, and phenylalanine 331. Residues histidine 370 and glutamate 372 contribute to the active site.

It belongs to the CarA family. As to quaternary structure, composed of two chains; the small (or glutamine) chain promotes the hydrolysis of glutamine to ammonia, which is used by the large (or ammonia) chain to synthesize carbamoyl phosphate. Tetramer of heterodimers (alpha,beta)4.

It carries out the reaction hydrogencarbonate + L-glutamine + 2 ATP + H2O = carbamoyl phosphate + L-glutamate + 2 ADP + phosphate + 2 H(+). The enzyme catalyses L-glutamine + H2O = L-glutamate + NH4(+). It participates in amino-acid biosynthesis; L-arginine biosynthesis; carbamoyl phosphate from bicarbonate: step 1/1. Its pathway is pyrimidine metabolism; UMP biosynthesis via de novo pathway; (S)-dihydroorotate from bicarbonate: step 1/3. Small subunit of the glutamine-dependent carbamoyl phosphate synthetase (CPSase). CPSase catalyzes the formation of carbamoyl phosphate from the ammonia moiety of glutamine, carbonate, and phosphate donated by ATP, constituting the first step of 2 biosynthetic pathways, one leading to arginine and/or urea and the other to pyrimidine nucleotides. The small subunit (glutamine amidotransferase) binds and cleaves glutamine to supply the large subunit with the substrate ammonia. The chain is Carbamoyl phosphate synthase small chain from Bartonella tribocorum (strain CIP 105476 / IBS 506).